A 334-amino-acid polypeptide reads, in one-letter code: L-lactate dehydrogenase A chain (334 aa).

NAD(+) contacts are provided by residues G30 to K58 and R100. The substrate site is built by R107, N139, and R170. An NAD(+)-binding site is contributed by N139. Catalysis depends on H194, which acts as the Proton acceptor. A substrate-binding site is contributed by T249.

This sequence belongs to the LDH/MDH superfamily. LDH family. In terms of assembly, homotetramer.

It localises to the cytoplasm. It catalyses the reaction (S)-lactate + NAD(+) = pyruvate + NADH + H(+). It participates in fermentation; pyruvate fermentation to lactate; (S)-lactate from pyruvate: step 1/1. In terms of biological role, interconverts simultaneously and stereospecifically pyruvate and lactate with concomitant interconversion of NADH and NAD(+). The chain is L-lactate dehydrogenase A chain (ldha) from Xenopus laevis (African clawed frog).